A 158-amino-acid polypeptide reads, in one-letter code: Transcriptional repressor NrdR (158 aa).

A zinc finger lies at 3–34; sequence CPYCGYPDSKVIDSRPTDDNTSIRRRRECLKC. An ATP-cone domain is found at 49–139; that stretch reads ILVIKKDNRR…VYRQFKDINT (91 aa).

This sequence belongs to the NrdR family. Zn(2+) is required as a cofactor.

Negatively regulates transcription of bacterial ribonucleotide reductase nrd genes and operons by binding to NrdR-boxes. The chain is Transcriptional repressor NrdR from Thermoanaerobacter sp. (strain X514).